The sequence spans 182 residues: NADH-quinone oxidoreductase subunit B 2 (182 aa).

4 residues coordinate [4Fe-4S] cluster: Cys-57, Cys-58, Cys-123, and Cys-153.

This sequence belongs to the complex I 20 kDa subunit family. In terms of assembly, NDH-1 is composed of 14 different subunits. Subunits NuoB, C, D, E, F, and G constitute the peripheral sector of the complex. Requires [4Fe-4S] cluster as cofactor.

The protein localises to the cell membrane. It carries out the reaction a quinone + NADH + 5 H(+)(in) = a quinol + NAD(+) + 4 H(+)(out). Its function is as follows. NDH-1 shuttles electrons from NADH, via FMN and iron-sulfur (Fe-S) centers, to quinones in the respiratory chain. The immediate electron acceptor for the enzyme in this species is believed to be a menaquinone. Couples the redox reaction to proton translocation (for every two electrons transferred, four hydrogen ions are translocated across the cytoplasmic membrane), and thus conserves the redox energy in a proton gradient. This chain is NADH-quinone oxidoreductase subunit B 2, found in Symbiobacterium thermophilum (strain DSM 24528 / JCM 14929 / IAM 14863 / T).